The following is a 172-amino-acid chain: Keratin-associated protein 13-3 (172 aa).

5 repeat units span residues 46–55 (CQLGSSLYRG), 56–65 (CQETCWRPNS), 66–75 (CQTLCVESSP), 76–85 (CHTSCYYPRT), and 92–101 (CLTMHVGSRG). Positions 46-101 (CQLGSSLYRGCQETCWRPNSCQTLCVESSPCHTSCYYPRTHMLCNSCLTMHVGSRG) are 5 X 10 AA approximate repeats.

Belongs to the PMG family. In terms of assembly, interacts with hair keratins.

Functionally, in the hair cortex, hair keratin intermediate filaments are embedded in an interfilamentous matrix, consisting of hair keratin-associated proteins (KRTAP), which are essential for the formation of a rigid and resistant hair shaft through their extensive disulfide bond cross-linking with abundant cysteine residues of hair keratins. The matrix proteins include the high-sulfur and high-glycine-tyrosine keratins. The protein is Keratin-associated protein 13-3 (KRTAP13-3) of Homo sapiens (Human).